We begin with the raw amino-acid sequence, 384 residues long: 1-deoxy-D-xylulose 5-phosphate reductoisomerase (384 aa).

Residues Thr-10, Gly-11, Ser-12, Ile-13, Lys-37, and Asn-124 each coordinate NADPH. Lys-125 provides a ligand contact to 1-deoxy-D-xylulose 5-phosphate. Glu-126 provides a ligand contact to NADPH. Position 150 (Asp-150) interacts with Mn(2+). 4 residues coordinate 1-deoxy-D-xylulose 5-phosphate: Ser-151, Glu-152, Ser-176, and His-199. A Mn(2+)-binding site is contributed by Glu-152. Residue Gly-205 coordinates NADPH. 1-deoxy-D-xylulose 5-phosphate-binding residues include Ser-212, Asn-217, Lys-218, and Glu-221. A Mn(2+)-binding site is contributed by Glu-221.

The protein belongs to the DXR family. The cofactor is Mg(2+). It depends on Mn(2+) as a cofactor.

It carries out the reaction 2-C-methyl-D-erythritol 4-phosphate + NADP(+) = 1-deoxy-D-xylulose 5-phosphate + NADPH + H(+). It participates in isoprenoid biosynthesis; isopentenyl diphosphate biosynthesis via DXP pathway; isopentenyl diphosphate from 1-deoxy-D-xylulose 5-phosphate: step 1/6. Functionally, catalyzes the NADPH-dependent rearrangement and reduction of 1-deoxy-D-xylulose-5-phosphate (DXP) to 2-C-methyl-D-erythritol 4-phosphate (MEP). This is 1-deoxy-D-xylulose 5-phosphate reductoisomerase from Clostridium tetani (strain Massachusetts / E88).